A 79-amino-acid polypeptide reads, in one-letter code: Acyl carrier protein (79 aa).

Residues 2-77 (SDIEARVKKI…NAIDYANTHQ (76 aa)) enclose the Carrier domain. At Ser-37 the chain carries O-(pantetheine 4'-phosphoryl)serine.

This sequence belongs to the acyl carrier protein (ACP) family. In terms of processing, 4'-phosphopantetheine is transferred from CoA to a specific serine of apo-ACP by AcpS. This modification is essential for activity because fatty acids are bound in thioester linkage to the sulfhydryl of the prosthetic group.

Its subcellular location is the cytoplasm. Its pathway is lipid metabolism; fatty acid biosynthesis. Functionally, carrier of the growing fatty acid chain in fatty acid biosynthesis. The sequence is that of Acyl carrier protein from Paracidovorax citrulli (strain AAC00-1) (Acidovorax citrulli).